The sequence spans 154 residues: Ecotin-like protein 2 (154 aa).

The protein belongs to the protease inhibitor I11 (ecotin) family.

This Trypanosoma brucei brucei (strain 927/4 GUTat10.1) protein is Ecotin-like protein 2.